The chain runs to 475 residues: tRNA modification GTPase MnmE (475 aa).

The (6S)-5-formyl-5,6,7,8-tetrahydrofolate site is built by arginine 24, glutamate 81, and lysine 124. The TrmE-type G domain occupies 220-397; the sequence is GLSVVLAGQP…LRKELLRLVG (178 aa). Position 230 (asparagine 230) interacts with K(+). Residues 230 to 235, 249 to 255, 274 to 277, and 378 to 380 each bind GTP; these read NVGKSS, TPIAGTT, DTAG, and SAR. Serine 234 is a binding site for Mg(2+). Positions 249, 251, and 254 each coordinate K(+). Threonine 255 is a binding site for Mg(2+). Lysine 475 provides a ligand contact to (6S)-5-formyl-5,6,7,8-tetrahydrofolate.

Belongs to the TRAFAC class TrmE-Era-EngA-EngB-Septin-like GTPase superfamily. TrmE GTPase family. As to quaternary structure, homodimer. Heterotetramer of two MnmE and two MnmG subunits. Requires K(+) as cofactor.

It is found in the cytoplasm. Functionally, exhibits a very high intrinsic GTPase hydrolysis rate. Involved in the addition of a carboxymethylaminomethyl (cmnm) group at the wobble position (U34) of certain tRNAs, forming tRNA-cmnm(5)s(2)U34. The protein is tRNA modification GTPase MnmE of Cupriavidus pinatubonensis (strain JMP 134 / LMG 1197) (Cupriavidus necator (strain JMP 134)).